The following is a 304-amino-acid chain: tRNA dimethylallyltransferase (304 aa).

2–9 (GPTASGKT) provides a ligand contact to ATP. Position 4-9 (4-9 (TASGKT)) interacts with substrate. The tract at residues 28 to 31 (DSAL) is interaction with substrate tRNA.

The protein belongs to the IPP transferase family. As to quaternary structure, monomer. Requires Mg(2+) as cofactor.

The enzyme catalyses adenosine(37) in tRNA + dimethylallyl diphosphate = N(6)-dimethylallyladenosine(37) in tRNA + diphosphate. Functionally, catalyzes the transfer of a dimethylallyl group onto the adenine at position 37 in tRNAs that read codons beginning with uridine, leading to the formation of N6-(dimethylallyl)adenosine (i(6)A). In Blochmanniella pennsylvanica (strain BPEN), this protein is tRNA dimethylallyltransferase.